We begin with the raw amino-acid sequence, 130 residues long: Histone H2A.6 (130 aa).

A compositionally biased stretch (gly residues) spans methionine 1–glycine 12. The interval methionine 1–alanine 23 is disordered.

Belongs to the histone H2A family. In terms of assembly, the nucleosome is a histone octamer containing two molecules each of H2A, H2B, H3 and H4 assembled in one H3-H4 heterotetramer and two H2A-H2B heterodimers. The octamer wraps approximately 147 bp of DNA. Interacts with VIP1. Post-translationally, not ubiquitinated. As to expression, low level of expression, mainly in dividing tissues: floral buds, margins of newly emerging leaves, expanding leaves and the meristematic zone of root tips. Also expressed in many non-dividing cells of the elongation zone of the root.

The protein localises to the nucleus. It is found in the chromosome. Functionally, core component of nucleosome. Nucleosomes wrap and compact DNA into chromatin, limiting DNA accessibility to the cellular machineries which require DNA as a template. Histones thereby play a central role in transcription regulation, DNA repair, DNA replication and chromosomal stability. DNA accessibility is regulated via a complex set of post-translational modifications of histones, also called histone code, and nucleosome remodeling. Required for the T-DNA integration step of plant transformation by Agrobacterium. May play an important role in illegitimate recombination. The protein is Histone H2A.6 (RAT5) of Arabidopsis thaliana (Mouse-ear cress).